The sequence spans 496 residues: MSLLITSPATVAAAATHLAGIGSALSTANAAAAAPTTALSVAGADEVSVLIAALFEAYAQEYQALSAQALAFHDQFVQALNMGAVCYAAAETANATPLQALQTVQQNVLTVVNAPTQALLGRPIIGNGANGLPNTGQDGGPGGLLFGNGGNGGSGGVDQAGGNGGAAGLIGNGGSGGVGGPGIAGSAGGAGGAGGLLFGNGGPGGAGGIGTTGDGGPGGAGGNAIGLFGSGGTGGMGGVGGMGGVGNGGNAGNGGTAGLFGHGGAGGAGGIGSADGGLGGGGGNGRFMGNGGVGGAGGYGASGDGGNAGNGGLGGVFGDGGAGGTGGLGDVNGGLAGIGGNAGFVRNGGAGGNGQLGSGAVSSAGGMGGNGGLVFGNGGPGGLGGPGTSAGNGGMGGNAVGLFGQGGAGGAGGSGFGAGIPGGRGGDGGSGGLIGDGGTGGGAGAGDAAASAGGNGGNARLIGNGGDGGPGMFGGPGGAGGSGGTIFGFAGTPGPS.

The 91-residue stretch at 4–94 (LITSPATVAA…VCYAAAETAN (91 aa)) folds into the PE domain. Positions 461–480 (LIGNGGDGGPGMFGGPGGAG) are disordered.

The protein belongs to the mycobacterial PE family. PGRS subfamily.

The protein resides in the secreted. It localises to the cell wall. Its subcellular location is the host mitochondrion. In terms of biological role, when expressed in host mitochondria, induces mitochondrial stress which results in mitochondrial membrane depolarization, up-regulation of mitochondrial superoxides and release of cytochrome-C in the cytoplasm. The cytochrome-C in cytoplasm triggers the activation of caspase-9, caspase-3 and caspase-7, leading to the apoptosis of host macrophages. Being a late expressing protein, apoptosis induction by PE_PGRS1 may facilitate the M.tuberculosis survival and silent expansion of its niche at the site of granuloma. Functionally, when expressed in THP-1 macrophages, promotes the survival of mycobacteria within macrophages after a 24- to 48-hour infection by blocking endoplasmic reticulum stress and inhibiting host cell apoptosis. Can chelate excessive intracellular calcium in THP-1 macrophages, which reduces the concentration of intracellular free Ca(2+) and blocks the PERK-eIF2alpha-ATF4 axis, thereby inhibiting the endoplasmic reticulum stress caused by infection. It also reduces the apoptosis of THP-1 macrophages by decreasing the activation of caspase-3 and caspase-9. The chain is PE-PGRS family protein PE_PGRS1 from Mycobacterium tuberculosis (strain ATCC 25618 / H37Rv).